Reading from the N-terminus, the 449-residue chain is Glucose-6-phosphate isomerase (449 aa).

The Proton donor role is filled by Glu-291. Active-site residues include His-312 and Lys-426.

It belongs to the GPI family.

The protein resides in the cytoplasm. It carries out the reaction alpha-D-glucose 6-phosphate = beta-D-fructose 6-phosphate. Its pathway is carbohydrate biosynthesis; gluconeogenesis. It participates in carbohydrate degradation; glycolysis; D-glyceraldehyde 3-phosphate and glycerone phosphate from D-glucose: step 2/4. Catalyzes the reversible isomerization of glucose-6-phosphate to fructose-6-phosphate. This chain is Glucose-6-phosphate isomerase, found in Streptococcus equi subsp. zooepidemicus (strain MGCS10565).